A 273-amino-acid chain; its full sequence is Kit ligand (273 aa).

An N-terminal signal peptide occupies residues 1-25 (MKKTQTWIITCIYLQLLLFNPLVKT). Topologically, residues 26–214 (KEICGNPVTD…AKAPEDSGLQ (189 aa)) are extracellular. 2 disulfides stabilise this stretch: C29-C114 and C68-C163. Residues N90, N97, N145, and N195 are each glycosylated (N-linked (GlcNAc...) asparagine). Positions 190–210 (ASSLRNDSSSSNRKAAKAPED) are disordered. A compositionally biased stretch (low complexity) spans 191-202 (SSLRNDSSSSNR). Residues 215-237 (WTAMALPALISLVIGFAFGALYW) traverse the membrane as a helical segment. The Cytoplasmic segment spans residues 238 to 273 (KKKQSSLTRAVENIQINEEDNEISMLQQKEREFQEV).

The protein belongs to the SCF family. In terms of assembly, homodimer, non-covalently linked. Heterotetramer with KIT, binding two KIT molecules; thereby mediates KIT dimerization and subsequent activation by autophosphorylation. In terms of processing, a soluble form is produced by proteolytic processing of isoform 1 in the extracellular domain. Expressed in the cochlea.

It is found in the cell membrane. The protein localises to the cytoplasm. The protein resides in the cytoskeleton. It localises to the cell projection. Its subcellular location is the lamellipodium. It is found in the filopodium. The protein localises to the secreted. Functionally, ligand for the receptor-type protein-tyrosine kinase KIT. Plays an essential role in the regulation of cell survival and proliferation, hematopoiesis, stem cell maintenance, gametogenesis, mast cell development, migration and function, and in melanogenesis. KITLG/SCF binding can activate several signaling pathways. Promotes phosphorylation of PIK3R1, the regulatory subunit of phosphatidylinositol 3-kinase, and subsequent activation of the kinase AKT1. KITLG/SCF and KIT also transmit signals via GRB2 and activation of RAS, RAF1 and the MAP kinases MAPK1/ERK2 and/or MAPK3/ERK1. KITLG/SCF and KIT promote activation of STAT family members STAT1, STAT3 and STAT5. KITLG/SCF and KIT promote activation of PLCG1, leading to the production of the cellular signaling molecules diacylglycerol and inositol 1,4,5-trisphosphate. KITLG/SCF acts synergistically with other cytokines, probably interleukins. This Mus musculus (Mouse) protein is Kit ligand (Kitlg).